Reading from the N-terminus, the 172-residue chain is Small ribosomal subunit protein uS5 (172 aa).

One can recognise an S5 DRBM domain in the interval 17-80 (LREKMISVNR…EQARRNMFKV (64 aa)).

It belongs to the universal ribosomal protein uS5 family. In terms of assembly, part of the 30S ribosomal subunit. Contacts proteins S4 and S8.

In terms of biological role, with S4 and S12 plays an important role in translational accuracy. Its function is as follows. Located at the back of the 30S subunit body where it stabilizes the conformation of the head with respect to the body. This Burkholderia orbicola (strain AU 1054) protein is Small ribosomal subunit protein uS5.